The primary structure comprises 356 residues: Dual-specificity RNA methyltransferase RlmN (356 aa).

Residue Glu87 is the Proton acceptor of the active site. The Radical SAM core domain occupies 106–339 (QEAKYTICVS…CTIRDSKGID (234 aa)). A disulfide bridge links Cys113 with Cys344. Residues Cys120, Cys124, and Cys127 each contribute to the [4Fe-4S] cluster site. S-adenosyl-L-methionine is bound by residues 170 to 171 (GE), Ser202, 225 to 227 (SLH), and Asn301. The S-methylcysteine intermediate role is filled by Cys344.

The protein belongs to the radical SAM superfamily. RlmN family. [4Fe-4S] cluster is required as a cofactor.

The protein resides in the cytoplasm. The enzyme catalyses adenosine(2503) in 23S rRNA + 2 reduced [2Fe-2S]-[ferredoxin] + 2 S-adenosyl-L-methionine = 2-methyladenosine(2503) in 23S rRNA + 5'-deoxyadenosine + L-methionine + 2 oxidized [2Fe-2S]-[ferredoxin] + S-adenosyl-L-homocysteine. It catalyses the reaction adenosine(37) in tRNA + 2 reduced [2Fe-2S]-[ferredoxin] + 2 S-adenosyl-L-methionine = 2-methyladenosine(37) in tRNA + 5'-deoxyadenosine + L-methionine + 2 oxidized [2Fe-2S]-[ferredoxin] + S-adenosyl-L-homocysteine. In terms of biological role, specifically methylates position 2 of adenine 2503 in 23S rRNA and position 2 of adenine 37 in tRNAs. m2A2503 modification seems to play a crucial role in the proofreading step occurring at the peptidyl transferase center and thus would serve to optimize ribosomal fidelity. The sequence is that of Dual-specificity RNA methyltransferase RlmN from Sulfurimonas denitrificans (strain ATCC 33889 / DSM 1251) (Thiomicrospira denitrificans (strain ATCC 33889 / DSM 1251)).